Reading from the N-terminus, the 261-residue chain is Chanoclavine-I dehydrogenase easD (261 aa).

A signal peptide spans 1-20; that stretch reads MPSMTSKVFAITGGASGIGA. Ile-18 contacts NADP(+). Residue Asn-43 is glycosylated (N-linked (GlcNAc...) asparagine). The NADP(+) site is built by Asp-66, Arg-132, Tyr-166, Lys-170, and Thr-201. The active-site Proton donor is the Tyr-166. Catalysis depends on Lys-170, which acts as the Lowers pKa of active site Tyr.

It belongs to the short-chain dehydrogenases/reductases (SDR) family. As to quaternary structure, homotetramer.

The catalysed reaction is chanoclavine-I + NAD(+) = chanoclavine-I aldehyde + NADH + H(+). Its pathway is alkaloid biosynthesis; ergot alkaloid biosynthesis. Its function is as follows. Chanoclavine-I dehydrogenase; part of the gene cluster that mediates the biosynthesis of fungal ergot alkaloid. DmaW catalyzes the first step of ergot alkaloid biosynthesis by condensing dimethylallyl diphosphate (DMAP) and tryptophan to form 4-dimethylallyl-L-tryptophan. The second step is catalyzed by the methyltransferase easF that methylates 4-dimethylallyl-L-tryptophan in the presence of S-adenosyl-L-methionine, resulting in the formation of 4-dimethylallyl-L-abrine. The catalase easC and the FAD-dependent oxidoreductase easE then transform 4-dimethylallyl-L-abrine to chanoclavine-I which is further oxidized by easD in the presence of NAD(+), resulting in the formation of chanoclavine-I aldehyde. Agroclavine dehydrogenase easG then mediates the conversion of chanoclavine-I aldehyde to agroclavine via a non-enzymatic adduct reaction: the substrate is an iminium intermediate that is formed spontaneously from chanoclavine-I aldehyde in the presence of glutathione. The presence of easA is not required to complete this reaction. Further conversion of agroclavine to paspalic acid is a two-step process involving oxidation of agroclavine to elymoclavine and of elymoclavine to paspalic acid, the second step being performed by the elymoclavine oxidase cloA. Paspalic acid is then further converted to D-lysergic acid. Ergopeptines are assembled from D-lysergic acid and three different amino acids by the D-lysergyl-peptide-synthetases composed each of a monomudular and a trimodular nonribosomal peptide synthetase subunit. LpsB and lpsC encode the monomodular subunits responsible for D-lysergic acid activation and incorporation into the ergopeptine backbone. LpsA1 and A2 subunits encode the trimodular nonribosomal peptide synthetase assembling the tripeptide portion of ergopeptines. LpsA1 is responsible for formation of the major ergopeptine, ergotamine, and lpsA2 for alpha-ergocryptine, the minor ergopeptine of the total alkaloid mixture elaborated by C.purpurea. D-lysergyl-tripeptides are assembled by the nonribosomal peptide synthetases and released as N-(D-lysergyl-aminoacyl)-lactams. Cyclolization of the D-lysergyl-tripeptides is performed by the Fe(2+)/2-ketoglutarate-dependent dioxygenase easH which introduces a hydroxyl group into N-(D-lysergyl-aminoacyl)-lactam at alpha-C of the aminoacyl residue followed by spontaneous condensation with the terminal lactam carbonyl group. The protein is Chanoclavine-I dehydrogenase easD of Claviceps purpurea (Ergot fungus).